The sequence spans 387 residues: 8-amino-7-oxononanoate synthase (387 aa).

Substrate contacts are provided by R31 and R38. A pyridoxal 5'-phosphate-binding site is contributed by 118-119 (GY). Residue H143 coordinates substrate. Pyridoxal 5'-phosphate contacts are provided by residues S191, 216 to 219 (DDAH), and 236 to 239 (TLSK). K239 carries the N6-(pyridoxal phosphate)lysine modification. A substrate-binding site is contributed by T348.

The protein belongs to the class-II pyridoxal-phosphate-dependent aminotransferase family. BioF subfamily. As to quaternary structure, homodimer. The cofactor is pyridoxal 5'-phosphate.

It carries out the reaction 6-carboxyhexanoyl-[ACP] + L-alanine + H(+) = (8S)-8-amino-7-oxononanoate + holo-[ACP] + CO2. It functions in the pathway cofactor biosynthesis; biotin biosynthesis. Its function is as follows. Catalyzes the decarboxylative condensation of pimeloyl-[acyl-carrier protein] and L-alanine to produce 8-amino-7-oxononanoate (AON), [acyl-carrier protein], and carbon dioxide. The polypeptide is 8-amino-7-oxononanoate synthase (Methylorubrum populi (strain ATCC BAA-705 / NCIMB 13946 / BJ001) (Methylobacterium populi)).